Here is a 519-residue protein sequence, read N- to C-terminus: MIOREX complex component 12 (519 aa).

Residues 1–35 (MLRSLHSAATLSNKRFYSLISHSNRKNIIKKLLRH) constitute a mitochondrion transit peptide.

As to quaternary structure, associates with the mitochondrial ribosome.

The protein resides in the mitochondrion. In terms of biological role, component of MIOREX complexes, large expressome-like assemblies of ribosomes with factors involved in all the steps of post-transcriptional gene expression. The chain is MIOREX complex component 12 from Saccharomyces cerevisiae (strain ATCC 204508 / S288c) (Baker's yeast).